A 456-amino-acid chain; its full sequence is Retrovirus-related Env polyprotein from copia-like transposable element 17.6 (456 aa).

Asn-44, Asn-151, Asn-228, Asn-310, Asn-368, and Asn-388 each carry an N-linked (GlcNAc...) asparagine glycan.

The protein is Retrovirus-related Env polyprotein from copia-like transposable element 17.6 (env) of Drosophila melanogaster (Fruit fly).